Consider the following 346-residue polypeptide: UDP-N-acetylenolpyruvoylglucosamine reductase (346 aa).

One can recognise an FAD-binding PCMH-type domain in the interval 18–189; it reads LRAQARAFIA…VSVVFALKTH (172 aa). The active site involves Arg-165. Residue Ser-240 is the Proton donor of the active site. The active site involves Glu-336.

The protein belongs to the MurB family. FAD serves as cofactor.

The protein localises to the cytoplasm. It carries out the reaction UDP-N-acetyl-alpha-D-muramate + NADP(+) = UDP-N-acetyl-3-O-(1-carboxyvinyl)-alpha-D-glucosamine + NADPH + H(+). It functions in the pathway cell wall biogenesis; peptidoglycan biosynthesis. In terms of biological role, cell wall formation. The sequence is that of UDP-N-acetylenolpyruvoylglucosamine reductase from Neisseria meningitidis serogroup A / serotype 4A (strain DSM 15465 / Z2491).